The primary structure comprises 489 residues: MLVLPLPLYEIIRHAPEWKPLEEVARELGSSVDSLMRYVEEGRAKGVLRVERKVIEFYELTEEGRQRAAEGLPEYKLLKSAVCREGRCTAHLSQHPEAQIALANLAKLGVKPRGNVVELDEETYKKIVAMLEEKQKALAAPHSAPPEVLKEFIKRKLVRKIEKTQVYVKAAVPLELVKPAEVKTVITSEDIATGRWRNYTLKPFDLNIEPPEYPAPVPHFFNEFLDYVREVMIGLGFEEVRGPVLEVEFWNFDALFQAQDHPAREVHDTFYVQWSGPLETPPEHLMESVGRVHEEKWRYKWDRKKALNPVLRTQTTATTIRALAERGDGEYKVFTIGRVFRPEKLDPKHSMEFHQLDGIVVGPGLTFKHLLGQLEEIAKALGMTKVKFRPAYFPFTSPSVEVYAQHPKLGWVEFGGAGIFRPEVTEPLGVKKSRVLAWGWGLDRIAMILLGIDDIRELFTKDLEKLKEYYARWARYKASVGAVGTLFTL.

L-phenylalanine is bound by residues threonine 316, 355-357, phenylalanine 395, and phenylalanine 420; that span reads QLD.

This sequence belongs to the class-II aminoacyl-tRNA synthetase family. Phe-tRNA synthetase alpha subunit type 2 subfamily. Tetramer of two alpha and two beta subunits. It depends on Mg(2+) as a cofactor.

It localises to the cytoplasm. The catalysed reaction is tRNA(Phe) + L-phenylalanine + ATP = L-phenylalanyl-tRNA(Phe) + AMP + diphosphate + H(+). This is Phenylalanine--tRNA ligase alpha subunit from Pyrobaculum aerophilum (strain ATCC 51768 / DSM 7523 / JCM 9630 / CIP 104966 / NBRC 100827 / IM2).